The primary structure comprises 226 residues: MEFQDFLLAASTGDLGAAPAAPEHVDLVEFRMDLAADPLAALDDYDGVLPVLATNRADWEGGAAADGGDRIDALAEAARTDCVAAVDIERSALVDDDTADGAEALAAARSTDTTTVVSAHDFDGTPSLSAMADLLGEACSLGDVGKLAVTPQDRGDALDVIRVTHEYSAAGMTVATMGMGDLGRHTRAVTPLYGSKLGYAPVADGETTAPGQYAPAALQALIADLQ.

3-dehydroquinate-binding positions include 29–31 (EFR) and R56. H120 functions as the Proton donor/acceptor in the catalytic mechanism. K146 functions as the Schiff-base intermediate with substrate in the catalytic mechanism. 3-dehydroquinate is bound by residues R187, T208, and Q212.

Belongs to the type-I 3-dehydroquinase family. As to quaternary structure, homodimer.

The catalysed reaction is 3-dehydroquinate = 3-dehydroshikimate + H2O. The protein operates within metabolic intermediate biosynthesis; chorismate biosynthesis; chorismate from D-erythrose 4-phosphate and phosphoenolpyruvate: step 3/7. In terms of biological role, involved in the third step of the chorismate pathway, which leads to the biosynthesis of aromatic amino acids. Catalyzes the cis-dehydration of 3-dehydroquinate (DHQ) and introduces the first double bond of the aromatic ring to yield 3-dehydroshikimate. This is 3-dehydroquinate dehydratase from Halobacterium salinarum (strain ATCC 700922 / JCM 11081 / NRC-1) (Halobacterium halobium).